The primary structure comprises 831 residues: Translation initiation factor IF-2 (831 aa).

A tr-type G domain is found at 329–499; the sequence is TRAPVVTVMG…LLISEMQDLK (171 aa). The segment at 338–345 is G1; that stretch reads GHVDHGKT. 338–345 is a binding site for GTP; that stretch reads GHVDHGKT. The tract at residues 363–367 is G2; that stretch reads GITQH. The G3 stretch occupies residues 385–388; the sequence is DTPG. GTP-binding positions include 385 to 389 and 439 to 442; these read DTPGH and NKID. Residues 439–442 form a G4 region; the sequence is NKID. Positions 475–477 are G5; it reads SAL.

The protein belongs to the TRAFAC class translation factor GTPase superfamily. Classic translation factor GTPase family. IF-2 subfamily.

The protein resides in the cytoplasm. In terms of biological role, one of the essential components for the initiation of protein synthesis. Protects formylmethionyl-tRNA from spontaneous hydrolysis and promotes its binding to the 30S ribosomal subunits. Also involved in the hydrolysis of GTP during the formation of the 70S ribosomal complex. This is Translation initiation factor IF-2 from Rickettsia typhi (strain ATCC VR-144 / Wilmington).